Reading from the N-terminus, the 213-residue chain is LIM domain-containing protein PLIM2c (213 aa).

LIM zinc-binding domains follow at residues Asp9–Glu69 and Asp105–Glu165. The segment at Ala177–Ser213 is disordered. The segment covering Ser182–Glu195 has biased composition (basic and acidic residues).

In terms of assembly, interacts with F-actin. As to expression, exclusively expressed in pollen grains.

It localises to the cytoplasm. The protein localises to the cytoskeleton. Binds to actin filaments and promotes cross-linking into thick bundles. Has an actin-stabilizing activity. Associates predominantly with long and dynamic actin bundles in the shank of growing pollen tubes. The actin regulatory activities are inhibited by pH &gt; 6.8 and/or high [Ca(2+)]. The polypeptide is LIM domain-containing protein PLIM2c (Arabidopsis thaliana (Mouse-ear cress)).